The chain runs to 216 residues: Large ribosomal subunit protein uL3 (216 aa).

Residues 133 to 145 (GRATHGNSRSHNV) show a composition bias toward polar residues. The disordered stretch occupies residues 133-153 (GRATHGNSRSHNVPGSIGMAQ). The residue at position 153 (glutamine 153) is an N5-methylglutamine.

Belongs to the universal ribosomal protein uL3 family. Part of the 50S ribosomal subunit. Forms a cluster with proteins L14 and L19. In terms of processing, methylated by PrmB.

One of the primary rRNA binding proteins, it binds directly near the 3'-end of the 23S rRNA, where it nucleates assembly of the 50S subunit. This is Large ribosomal subunit protein uL3 from Burkholderia cenocepacia (strain ATCC BAA-245 / DSM 16553 / LMG 16656 / NCTC 13227 / J2315 / CF5610) (Burkholderia cepacia (strain J2315)).